Here is a 327-residue protein sequence, read N- to C-terminus: MSEKIAVIGSGAFGTALAAVIALAGRSAVTLVGRNPSLMADLKSERLHDAVLPGIVLPESLEFSAEAEAVAGASIVLFAMPSQAQADAVRQYGLYLSKDAVVVTCAKGIERTTGNLLTDMLERELPDHPVAVLSGPGFAADIAKGLPTAMAIAADGMETAERLAQAISGRTFRLYASTDRIGVQLGGALKNVLAIACGIVEGRGIGESARAALIARGLAEMSRFVVAKGGQADTVRGLSGLGDLVLTATSHQSRNLRFGIALGRGEKTDPAHGALVEGAFAASVASRLAAELSISMPITDAVSAIIDGRLDISDAIEQLMTRPITTE.

NADPH is bound by residues F13, R34, and K107. Positions 107 and 135 each coordinate sn-glycerol 3-phosphate. A139 provides a ligand contact to NADPH. K190, D243, S253, R254, and N255 together coordinate sn-glycerol 3-phosphate. Catalysis depends on K190, which acts as the Proton acceptor. R254 contributes to the NADPH binding site. NADPH is bound by residues V276 and E277.

It belongs to the NAD-dependent glycerol-3-phosphate dehydrogenase family.

The protein resides in the cytoplasm. It catalyses the reaction sn-glycerol 3-phosphate + NAD(+) = dihydroxyacetone phosphate + NADH + H(+). It carries out the reaction sn-glycerol 3-phosphate + NADP(+) = dihydroxyacetone phosphate + NADPH + H(+). The protein operates within membrane lipid metabolism; glycerophospholipid metabolism. Its function is as follows. Catalyzes the reduction of the glycolytic intermediate dihydroxyacetone phosphate (DHAP) to sn-glycerol 3-phosphate (G3P), the key precursor for phospholipid synthesis. The polypeptide is Glycerol-3-phosphate dehydrogenase [NAD(P)+] (Rhizobium etli (strain ATCC 51251 / DSM 11541 / JCM 21823 / NBRC 15573 / CFN 42)).